The primary structure comprises 391 residues: Multidrug resistance protein MdtL (391 aa).

The next 12 helical transmembrane spans lie at 4–24, 42–62, 69–89, 93–113, 134–154, 158–178, 203–222, 245–265, 269–289, 293–313, 331–351, and 356–376; these read FLICSFALVLLYPAGIDMYLV, IAFSVYLAGMAAAMLFAGKVA, PVAIPGAALFIIASVFCSLAE, LFLAGRFLQGLGAGCCYVVAF, GITCIIPVLAPVLGHLIMLNF, SLFWTMAIMGVAVLMLSLFIL, FFLSRVVITTLSVSVILTFV, ALTAGVSMTVSFSTPFALGIF, TLMITSQVLFLAAGITLAVSP, VSLFGITLICAGFSVGFGVAM, LGIAQVCGSSLWIWLAAVVGI, and MLIGILIACSIVSLLLIMFVA.

Belongs to the major facilitator superfamily. DHA1 family. MdtL (TC 2.A.1.2.22) subfamily.

The protein resides in the cell inner membrane. Functionally, confers resistance to chloramphenicol. The chain is Multidrug resistance protein MdtL from Escherichia coli O81 (strain ED1a).